Reading from the N-terminus, the 464-residue chain is Glutamate--tRNA ligase (464 aa).

Positions P9–G19 match the 'HIGH' region motif. Positions K242–R246 match the 'KMSKS' region motif. K245 provides a ligand contact to ATP.

It belongs to the class-I aminoacyl-tRNA synthetase family. Glutamate--tRNA ligase type 1 subfamily. In terms of assembly, monomer.

The protein localises to the cytoplasm. It carries out the reaction tRNA(Glu) + L-glutamate + ATP = L-glutamyl-tRNA(Glu) + AMP + diphosphate. Catalyzes the attachment of glutamate to tRNA(Glu) in a two-step reaction: glutamate is first activated by ATP to form Glu-AMP and then transferred to the acceptor end of tRNA(Glu). The protein is Glutamate--tRNA ligase of Neisseria meningitidis serogroup B (strain ATCC BAA-335 / MC58).